Here is a 160-residue protein sequence, read N- to C-terminus: MLNIRILVVGKIKEKYFRNALDQYLKRLSRFTKIEIIEVKDEATPEKASKSENLEILQTEGGRLLDKINNRDFVIALAIEGKLITSPDLADMIREIPLDGYSTIDFVIGGSLGLSNEIKNRANAKISFGRITLPHQLARVLLTEQIYRSFMINEGSPYHK.

S-adenosyl-L-methionine-binding positions include Leu-77, Gly-109, and 128-133; that span reads FGRITL.

It belongs to the RNA methyltransferase RlmH family. Homodimer.

The protein localises to the cytoplasm. The enzyme catalyses pseudouridine(1915) in 23S rRNA + S-adenosyl-L-methionine = N(3)-methylpseudouridine(1915) in 23S rRNA + S-adenosyl-L-homocysteine + H(+). Specifically methylates the pseudouridine at position 1915 (m3Psi1915) in 23S rRNA. The protein is Ribosomal RNA large subunit methyltransferase H of Oenococcus oeni (strain ATCC BAA-331 / PSU-1).